Reading from the N-terminus, the 360-residue chain is Nucleoporin SEH1 (360 aa).

6 WD repeats span residues 10–49 (DHKDLIHDVSFDFHGRRMATCSSDQSVKVWDKSESGDWHC), 55–96 (THSG…SNDK), 111–152 (DSRT…NLSQ), 160–210 (SCKL…RKYA), 217–258 (TVTD…KELT), and 276–315 (NHNSQVWRVSWNITGTVLASSGDDGCVRLWKANYMDNWKC). Lysine 12 participates in a covalent cross-link: Glycyl lysine isopeptide (Lys-Gly) (interchain with G-Cter in SUMO2). A phosphoserine mark is found at serine 179 and serine 190. Residues 324–354 (SPVNGSSQQGTSNPSLGSTIPSLQNSLNGSS) show a composition bias toward polar residues. Positions 324-360 (SPVNGSSQQGTSNPSLGSTIPSLQNSLNGSSAGRKHS) are disordered.

This sequence belongs to the WD repeat SEC13 family. Component of the Nup107-160 subcomplex of the nuclear pore complex (NPC). The Nup107-160 subcomplex includes NUP160, NUP133, NUP107, NUP98, NUP85, NUP43, NUP37, SEH1 and SEC13. The SEH1 subunit appears to be only weakly associated with the Nup107-160 subcomplex. Component of the GATOR2 subcomplex, composed of MIOS, SEC13, SEH1L, WDR24 and WDR59. The GATOR2 complex interacts with CASTOR1 and CASTOR2; the interaction is negatively regulated by arginine. The GATOR2 complex interacts with SESN1, SESN2 and SESN3; the interaction is negatively regulated by amino acids. SESN1, SESN2 and SESN3 convey leucine availability via direct interaction with SEH1L and WDR24.

It localises to the chromosome. The protein localises to the centromere. The protein resides in the kinetochore. Its subcellular location is the nucleus. It is found in the nuclear pore complex. It localises to the lysosome membrane. The GATOR2 complex is negatively regulated by the upstream amino acid sensors CASTOR1 and SESN2, which sequester the GATOR2 complex in absence of amino acids. In the presence of abundant amino acids, GATOR2 is released from CASTOR1 and SESN2 and activated. Functionally, component of the Nup107-160 subcomplex of the nuclear pore complex (NPC). The Nup107-160 subcomplex is required for the assembly of a functional NPC. The Nup107-160 subcomplex is also required for normal kinetochore microtubule attachment, mitotic progression and chromosome segregation. This subunit plays a role in recruitment of the Nup107-160 subcomplex to the kinetochore. In terms of biological role, as a component of the GATOR2 complex, functions as an activator of the amino acid-sensing branch of the mTORC1 signaling pathway. The GATOR2 complex indirectly activates mTORC1 through the inhibition of the GATOR1 subcomplex. GATOR2 probably acts as an E3 ubiquitin-protein ligase toward GATOR1. In the presence of abundant amino acids, the GATOR2 complex mediates ubiquitination of the NPRL2 core component of the GATOR1 complex, leading to GATOR1 inactivation. In the absence of amino acids, GATOR2 is inhibited, activating the GATOR1 complex. Within the GATOR2 complex, SEC13 and SEH1L are required to stabilize the complex. The chain is Nucleoporin SEH1 (SEH1L) from Homo sapiens (Human).